Consider the following 89-residue polypeptide: Teretoxin Tan6.8 (89 aa).

A signal peptide spans 1-21 (MRLLLILLLLTPVILAGSLDE). Residues 22–42 (EPNNADGANAASFTADQEGRH) form a disordered region. Positions 22 to 44 (EPNNADGANAASFTADQEGRHKR) are excised as a propeptide.

Contains 3 disulfide bonds. Expressed by the venom duct.

Its subcellular location is the secreted. The polypeptide is Teretoxin Tan6.8 (Terebra anilis (Auger snail)).